A 490-amino-acid chain; its full sequence is Cobyric acid synthase (490 aa).

In terms of domain architecture, GATase cobBQ-type spans 252-439 (RLKVVVPVLP…LHGLFESTAA (188 aa)). C333 serves as the catalytic Nucleophile. The active site involves H431.

It belongs to the CobB/CobQ family. CobQ subfamily.

It functions in the pathway cofactor biosynthesis; adenosylcobalamin biosynthesis. Functionally, catalyzes amidations at positions B, D, E, and G on adenosylcobyrinic A,C-diamide. NH(2) groups are provided by glutamine, and one molecule of ATP is hydrogenolyzed for each amidation. The polypeptide is Cobyric acid synthase (Pseudomonas aeruginosa (strain ATCC 15692 / DSM 22644 / CIP 104116 / JCM 14847 / LMG 12228 / 1C / PRS 101 / PAO1)).